Here is a 472-residue protein sequence, read N- to C-terminus: Glutamate--tRNA ligase (472 aa).

The 'HIGH' region signature appears at 10–20; the sequence is PSPTGYLHVGG. Residues Cys99, Cys101, Cys126, and His128 each coordinate Zn(2+). The short motif at 238-242 is the 'KMSKS' region element; it reads KLSKR. Lys241 is a binding site for ATP.

Belongs to the class-I aminoacyl-tRNA synthetase family. Glutamate--tRNA ligase type 1 subfamily. Monomer. Zn(2+) is required as a cofactor.

The protein resides in the cytoplasm. It carries out the reaction tRNA(Glu) + L-glutamate + ATP = L-glutamyl-tRNA(Glu) + AMP + diphosphate. Its function is as follows. Catalyzes the attachment of glutamate to tRNA(Glu) in a two-step reaction: glutamate is first activated by ATP to form Glu-AMP and then transferred to the acceptor end of tRNA(Glu). The sequence is that of Glutamate--tRNA ligase from Proteus mirabilis (strain HI4320).